A 359-amino-acid chain; its full sequence is Uroporphyrinogen decarboxylase (359 aa).

Residues 36-40 (RQAGR), D85, Y160, S215, and H338 contribute to the substrate site.

The protein belongs to the uroporphyrinogen decarboxylase family. In terms of assembly, homodimer.

The protein localises to the cytoplasm. It catalyses the reaction uroporphyrinogen III + 4 H(+) = coproporphyrinogen III + 4 CO2. The protein operates within porphyrin-containing compound metabolism; protoporphyrin-IX biosynthesis; coproporphyrinogen-III from 5-aminolevulinate: step 4/4. In terms of biological role, catalyzes the decarboxylation of four acetate groups of uroporphyrinogen-III to yield coproporphyrinogen-III. The polypeptide is Uroporphyrinogen decarboxylase (Corynebacterium efficiens (strain DSM 44549 / YS-314 / AJ 12310 / JCM 11189 / NBRC 100395)).